The primary structure comprises 183 residues: Glutathione-regulated potassium-efflux system ancillary protein KefG (183 aa).

This sequence belongs to the NAD(P)H dehydrogenase (quinone) family. KefG subfamily. As to quaternary structure, interacts with KefB.

It is found in the cell inner membrane. The catalysed reaction is a quinone + NADH + H(+) = a quinol + NAD(+). It carries out the reaction a quinone + NADPH + H(+) = a quinol + NADP(+). Regulatory subunit of a potassium efflux system that confers protection against electrophiles. Required for full activity of KefB. The sequence is that of Glutathione-regulated potassium-efflux system ancillary protein KefG from Pectobacterium atrosepticum (strain SCRI 1043 / ATCC BAA-672) (Erwinia carotovora subsp. atroseptica).